A 512-amino-acid chain; its full sequence is Probable cytosol aminopeptidase (512 aa).

The Mn(2+) site is built by K284 and D289. K296 is a catalytic residue. The Mn(2+) site is built by D307, D366, and E368. Residue R370 is part of the active site.

It belongs to the peptidase M17 family. Mn(2+) serves as cofactor.

The protein localises to the cytoplasm. It carries out the reaction Release of an N-terminal amino acid, Xaa-|-Yaa-, in which Xaa is preferably Leu, but may be other amino acids including Pro although not Arg or Lys, and Yaa may be Pro. Amino acid amides and methyl esters are also readily hydrolyzed, but rates on arylamides are exceedingly low.. The enzyme catalyses Release of an N-terminal amino acid, preferentially leucine, but not glutamic or aspartic acids.. Its function is as follows. Presumably involved in the processing and regular turnover of intracellular proteins. Catalyzes the removal of unsubstituted N-terminal amino acids from various peptides. In Cupriavidus necator (strain ATCC 17699 / DSM 428 / KCTC 22496 / NCIMB 10442 / H16 / Stanier 337) (Ralstonia eutropha), this protein is Probable cytosol aminopeptidase.